A 36-amino-acid chain; its full sequence is Photosystem II reaction center protein M (36 aa).

The helical transmembrane segment at 7–27 (GFVASLMFVLVPTVFLIVLFI) threads the bilayer.

This sequence belongs to the PsbM family. As to quaternary structure, PSII is composed of 1 copy each of membrane proteins PsbA, PsbB, PsbC, PsbD, PsbE, PsbF, PsbH, PsbI, PsbJ, PsbK, PsbL, PsbM, PsbT, PsbX, PsbY, PsbZ, Psb30/Ycf12, peripheral proteins PsbO, CyanoQ (PsbQ), PsbU, PsbV and a large number of cofactors. It forms dimeric complexes.

Its subcellular location is the cellular thylakoid membrane. Functionally, one of the components of the core complex of photosystem II (PSII). PSII is a light-driven water:plastoquinone oxidoreductase that uses light energy to abstract electrons from H(2)O, generating O(2) and a proton gradient subsequently used for ATP formation. It consists of a core antenna complex that captures photons, and an electron transfer chain that converts photonic excitation into a charge separation. This subunit is found at the monomer-monomer interface. The protein is Photosystem II reaction center protein M of Synechococcus sp. (strain CC9311).